The chain runs to 427 residues: Peptidase B (427 aa).

2 residues coordinate Mn(2+): Lys195 and Asp200. Residue Lys207 is part of the active site. Positions 218, 277, and 279 each coordinate Mn(2+). Arg281 is a catalytic residue.

The protein belongs to the peptidase M17 family. As to quaternary structure, homohexamer. Mn(2+) is required as a cofactor.

The protein localises to the cytoplasm. The enzyme catalyses Release of an N-terminal amino acid, Xaa, from a peptide or arylamide. Xaa is preferably Glu or Asp but may be other amino acids, including Leu, Met, His, Cys and Gln.. In terms of biological role, probably plays an important role in intracellular peptide degradation. The protein is Peptidase B of Escherichia fergusonii (strain ATCC 35469 / DSM 13698 / CCUG 18766 / IAM 14443 / JCM 21226 / LMG 7866 / NBRC 102419 / NCTC 12128 / CDC 0568-73).